We begin with the raw amino-acid sequence, 561 residues long: Arginine--tRNA ligase (561 aa).

The 'HIGH' region signature appears at 129 to 139; the sequence is ANPTGPLHVGH.

It belongs to the class-I aminoacyl-tRNA synthetase family. As to quaternary structure, monomer.

The protein localises to the cytoplasm. The catalysed reaction is tRNA(Arg) + L-arginine + ATP = L-arginyl-tRNA(Arg) + AMP + diphosphate. The chain is Arginine--tRNA ligase from Polaromonas sp. (strain JS666 / ATCC BAA-500).